The sequence spans 244 residues: Phosphoadenosine 5'-phosphosulfate reductase (244 aa).

Cysteine 239 serves as the catalytic Nucleophile; cysteine thiosulfonate intermediate.

This sequence belongs to the PAPS reductase family. CysH subfamily.

Its subcellular location is the cytoplasm. The enzyme catalyses [thioredoxin]-disulfide + sulfite + adenosine 3',5'-bisphosphate + 2 H(+) = [thioredoxin]-dithiol + 3'-phosphoadenylyl sulfate. It participates in sulfur metabolism; hydrogen sulfide biosynthesis; sulfite from sulfate: step 3/3. Functionally, catalyzes the formation of sulfite from phosphoadenosine 5'-phosphosulfate (PAPS) using thioredoxin as an electron donor. This is Phosphoadenosine 5'-phosphosulfate reductase from Buchnera aphidicola subsp. Acyrthosiphon pisum (strain 5A).